The sequence spans 253 residues: Endonuclease NucS (253 aa).

The interval 63–91 (IDDPDTDFTDGSSVGNSEEQGTDGSAHTA) is disordered. Positions 71–87 (TDGSSVGNSEEQGTDGS) are enriched in polar residues.

It belongs to the NucS endonuclease family.

The protein localises to the cytoplasm. Functionally, cleaves both 3' and 5' ssDNA extremities of branched DNA structures. This chain is Endonuclease NucS, found in Corynebacterium kroppenstedtii (strain DSM 44385 / JCM 11950 / CIP 105744 / CCUG 35717).